Here is a 447-residue protein sequence, read N- to C-terminus: M-phase inducer phosphatase 3 (447 aa).

Ser-2 is modified (N-acetylserine). A phosphoserine mark is found at Ser-20, Ser-38, Ser-56, Ser-60, and Ser-63. At Thr-66 the chain carries Phosphothreonine; by CDK1. The segment covering 81-90 has biased composition (polar residues); that stretch reads MSASPLTTSA. Residues 81–109 are disordered; sequence MSASPLTTSADLEDNGSLDSSGPLDRQLT. The residue at position 128 (Ser-128) is a Phosphoserine. Phosphothreonine is present on Thr-129. Ser-192 is modified (phosphoserine; by CDK1). A phosphoserine; by PLK3 mark is found at Ser-213 and Ser-220. Positions 294–401 constitute a Rhodanese domain; the sequence is VIERFYIIDC…FFPEYMELCD (108 aa). The active site involves Cys-350. Phosphoserine is present on Ser-445.

The protein belongs to the MPI phosphatase family. As to quaternary structure, interacts with MAPK14 and 14-3-3 proteins. When phosphorylated on Ser-128 and/or Thr-129, interacts with PLK1. Interacts with MARK3/C-TAK1. Post-translationally, phosphorylated by PLK4. Phosphorylated by PLK1, leading to activate the phosphatase activity. Phosphorylated by CHEK1 and MAPKAPK2. This phosphorylation creates a binding site for 14-3-3 protein and inhibits the phosphatase activity. Phosphorylation by PLK3 at Ser-213 promotes nuclear translocation. Ser-220 is a minor phosphorylation site. Phosphorylation by CDK1 occurs at G2 and G2-M transition and leads to increased activity. In terms of tissue distribution, spleen and thymus.

Its subcellular location is the nucleus. It carries out the reaction O-phospho-L-tyrosyl-[protein] + H2O = L-tyrosyl-[protein] + phosphate. In terms of biological role, functions as a dosage-dependent inducer in mitotic control. Tyrosine protein phosphatase required for progression of the cell cycle. When phosphorylated, highly effective in activating G2 cells into prophase. Directly dephosphorylates CDK1 and activates its kinase activity. The protein is M-phase inducer phosphatase 3 (Cdc25c) of Mus musculus (Mouse).